The following is a 455-amino-acid chain: Probable Xaa-Pro aminopeptidase GSTUM_00008071001 (455 aa).

Mn(2+) contacts are provided by Asp-251, Asp-262, Glu-386, and Glu-426.

This sequence belongs to the peptidase M24B family. The cofactor is Mn(2+).

The catalysed reaction is Release of any N-terminal amino acid, including proline, that is linked to proline, even from a dipeptide or tripeptide.. Catalyzes the removal of a penultimate prolyl residue from the N-termini of peptides. The sequence is that of Probable Xaa-Pro aminopeptidase GSTUM_00008071001 from Tuber melanosporum (strain Mel28) (Perigord black truffle).